A 258-amino-acid polypeptide reads, in one-letter code: Small ribosomal subunit protein uS2 (258 aa).

The protein belongs to the universal ribosomal protein uS2 family.

The chain is Small ribosomal subunit protein uS2 from Streptococcus suis (strain 05ZYH33).